A 497-amino-acid chain; its full sequence is Cytochrome P450 monooxygenase cicH (497 aa).

The chain crosses the membrane as a helical span at residues 2–19 (AILVRLFFALFVVSVYFF). Cys439 contacts heme. Asn443 carries N-linked (GlcNAc...) asparagine glycosylation.

Belongs to the cytochrome P450 family. Heme is required as a cofactor.

The protein localises to the membrane. The protein operates within phytotoxin biosynthesis. In terms of biological role, cytochrome P450 monooxygenase; part of the gene cluster that mediates the biosynthesis of cichorine, a phytotoxin active against knapweed, corn, and soybeans. The first step in the pathway is performed by the non-reducing polyketide synthase pkbA that condenses one acetyl-CoA starter unit with 3 malonyl-CoA units. PkbA also catalyzes one methylation step to produce 3-methylorsellinate. The nonribosomal peptide synthase-like protein cicB, the cytochrome P450 monooxygenase cicH and the O-methyltransferase cicE are involved in the conversion of 3-methylorsellinate into nidulol. CicB converts 3-methylorsellinate to a yet unidentified intermediate, cicH may play a ring-closing role for cichorine and cicE is plausibly responsible for the methylation of one of the phenol groups. The oxidoreductase cicC acts downstream with still unidentified enzymes to further convert nidulol into cichorine. This chain is Cytochrome P450 monooxygenase cicH, found in Emericella nidulans (strain FGSC A4 / ATCC 38163 / CBS 112.46 / NRRL 194 / M139) (Aspergillus nidulans).